The following is a 110-amino-acid chain: Large ribosomal subunit protein uL22 (110 aa).

Belongs to the universal ribosomal protein uL22 family. Part of the 50S ribosomal subunit.

In terms of biological role, this protein binds specifically to 23S rRNA; its binding is stimulated by other ribosomal proteins, e.g. L4, L17, and L20. It is important during the early stages of 50S assembly. It makes multiple contacts with different domains of the 23S rRNA in the assembled 50S subunit and ribosome. Its function is as follows. The globular domain of the protein is located near the polypeptide exit tunnel on the outside of the subunit, while an extended beta-hairpin is found that lines the wall of the exit tunnel in the center of the 70S ribosome. This chain is Large ribosomal subunit protein uL22, found in Pseudoalteromonas atlantica (strain T6c / ATCC BAA-1087).